Here is a 142-residue protein sequence, read N- to C-terminus: Large ribosomal subunit protein uL13 (142 aa).

It belongs to the universal ribosomal protein uL13 family. In terms of assembly, part of the 50S ribosomal subunit.

Its function is as follows. This protein is one of the early assembly proteins of the 50S ribosomal subunit, although it is not seen to bind rRNA by itself. It is important during the early stages of 50S assembly. This chain is Large ribosomal subunit protein uL13, found in Acidithiobacillus ferrooxidans (strain ATCC 23270 / DSM 14882 / CIP 104768 / NCIMB 8455) (Ferrobacillus ferrooxidans (strain ATCC 23270)).